Reading from the N-terminus, the 103-residue chain is Thrombin inhibitor rhodniin (103 aa).

Kazal-like domains are found at residues 1–50 (EGGE…PCEP) and 51–103 (DEDE…PCRT). Disulfide bonds link Cys-6–Cys-31, Cys-8–Cys-27, Cys-16–Cys-48, Cys-57–Cys-84, Cys-60–Cys-80, and Cys-69–Cys-101.

It localises to the secreted. Its function is as follows. Thrombin-specific inhibitor. Appears to form 1:1 complexes with thrombin. Prevents blood clotting to allow the insect to feed on blood. The protein is Thrombin inhibitor rhodniin of Rhodnius prolixus (Triatomid bug).